The chain runs to 266 residues: MTTILFELGTEELPPKNLKTLRDALKNSVGTLLNDQNISFDDIHAFAAPRRLALTITGVGEFQPDRIETKKGPSVKAAFDDAGNLTRAGQGFLQGLNATGRNLSVKDLGRIADKKGEYIAYDLTIKGEKITDLMPNILQKALDDLPIAKRMRSGIDRHEFIRPVHWIVLMSDDVVIEATIQGHKTGNQSRGHRYHSPDFFAIDHADHYENLLKNHHVIADFDQRQADILAQVKTLADDVNGTAIMPQELLDEVTALVDLPVALRAS.

It belongs to the class-II aminoacyl-tRNA synthetase family. In terms of assembly, tetramer of two alpha and two beta subunits.

It localises to the cytoplasm. It catalyses the reaction tRNA(Gly) + glycine + ATP = glycyl-tRNA(Gly) + AMP + diphosphate. The sequence is that of Glycine--tRNA ligase beta subunit (glyS) from Moraxella catarrhalis (Branhamella catarrhalis).